Here is a 330-residue protein sequence, read N- to C-terminus: D-alanine--D-alanine ligase (330 aa).

The ATP-grasp domain occupies 122–323 (NRFLSGFGIR…MKEVLCTIIR (202 aa)). 151–206 (TARMGLPLFVKPNVGGSSIATTKVVEAAQLLPAIGQAFSEGEEVMIERLICGTEVT) contributes to the ATP binding site. Mg(2+) contacts are provided by D277, E290, and N292.

Belongs to the D-alanine--D-alanine ligase family. Requires Mg(2+) as cofactor. Mn(2+) is required as a cofactor.

The protein resides in the cytoplasm. The enzyme catalyses 2 D-alanine + ATP = D-alanyl-D-alanine + ADP + phosphate + H(+). Its pathway is cell wall biogenesis; peptidoglycan biosynthesis. Its function is as follows. Cell wall formation. In Porphyromonas gingivalis (strain ATCC 33277 / DSM 20709 / CIP 103683 / JCM 12257 / NCTC 11834 / 2561), this protein is D-alanine--D-alanine ligase.